The primary structure comprises 97 residues: MANNKSAKKRIKVAERNRLVNKSYKSTVKTLTKKTLANCEKYKLDPNSDNKNLVMFSLSEAFSLIDKAVKKNVLHKNNGANKKSKINKLVKNFLTSK.

The protein belongs to the bacterial ribosomal protein bS20 family.

Binds directly to 16S ribosomal RNA. The polypeptide is Small ribosomal subunit protein bS20 (Prochlorococcus marinus (strain MIT 9515)).